Consider the following 420-residue polypeptide: Phospholipase A1-II 3 (420 aa).

The N-terminal stretch at 1 to 21 (MCCFLLVSVLLATTLTDVASA) is a signal peptide. Asparagine 231 carries N-linked (GlcNAc...) asparagine glycosylation. Serine 240 acts as the Acyl-ester intermediate in catalysis. Serine 240 (charge relay system) is an active-site residue. N-linked (GlcNAc...) asparagine glycosylation occurs at asparagine 294. Active-site charge relay system residues include aspartate 305 and histidine 343. A coiled-coil region spans residues 367-388 (VVDRDLALVNKEVDALRDEYQV). Asparagine 403 carries an N-linked (GlcNAc...) asparagine glycan.

The protein belongs to the AB hydrolase superfamily. Lipase family.

It is found in the secreted. In terms of biological role, acylhydrolase that catalyzes the hydrolysis of phospholipids at the sn-1 position. The sequence is that of Phospholipase A1-II 3 from Oryza sativa subsp. indica (Rice).